The chain runs to 226 residues: Phosphoglycolate phosphatase (226 aa).

D9 acts as the Nucleophile in catalysis. 2 residues coordinate Mg(2+): D9 and D11. Residue K150 coordinates substrate. Mg(2+)-binding residues include D173 and D177.

It belongs to the archaeal SPP-like hydrolase family. Requires Mg(2+) as cofactor.

It catalyses the reaction 2-phosphoglycolate + H2O = glycolate + phosphate. Functionally, catalyzes the dephosphorylation of 2-phosphoglycolate. The protein is Phosphoglycolate phosphatase of Methanosarcina mazei (strain ATCC BAA-159 / DSM 3647 / Goe1 / Go1 / JCM 11833 / OCM 88) (Methanosarcina frisia).